Consider the following 460-residue polypeptide: Ammonium transporter Rh type B-A (460 aa).

Residues 1-10 (MTGYSTNMRI) are Cytoplasmic-facing. A helical membrane pass occupies residues 11 to 31 (KLPLFCLILQFITIILFAVFV). Residues 32 to 62 (RYDHESDARGWHDELKNHSTANADNDFYFRY) are Extracellular-facing. N-linked (GlcNAc...) asparagine glycosylation occurs at asparagine 48. The chain crosses the membrane as a helical span at residues 63–83 (PSFQDVHVMIFIGFGFLMTFL). Residues 84–87 (KRYG) lie on the Cytoplasmic side of the membrane. A helical transmembrane segment spans residues 88 to 108 (FSSVAFNFLIAAFGLQWSTLI). The Extracellular portion of the chain corresponds to 109-125 (QGFFHGFHDGKIHVGIE). Residues 126–146 (SMINADFCTGAVLISFGAVLG) traverse the membrane as a helical segment. The Cytoplasmic segment spans residues 147–150 (KTSP). The chain crosses the membrane as a helical span at residues 151-171 (VQLIVMTLIEVTLFGINEYII). Over 172–179 (LNIVGAKD) the chain is Extracellular. Residues 180–202 (AGGSMTIHTFGAYFGLIVSRVLY) traverse the membrane as a helical segment. Topologically, residues 203-220 (RADLDKSRQREGSVYHSD) are cytoplasmic. Residues 221-241 (LFAMIGTIYLWMFWPSFNSAV) traverse the membrane as a helical segment. The Extracellular portion of the chain corresponds to 242 to 252 (TAHGDDQHRTV). A helical transmembrane segment spans residues 253–273 (LNTYYSLAACTLATFGFSALL). The Cytoplasmic segment spans residues 274 to 283 (NGEGKLDMVH). A helical membrane pass occupies residues 284–304 (IQNAALAGGVAVGTSGEMMLT). A topological domain (extracellular) is located at residue proline 305. A helical membrane pass occupies residues 306–326 (FGAMIAGTLAGIVSVLGYKYL). Over 327–347 (TPVLDSKLKIQDTCGVHNLHG) the chain is Cytoplasmic. Residues 348-368 (MPGILGAVIGAIVALFATADI) form a helical membrane-spanning segment. Residues 369–394 (YGDGMDDVFPMIFDGSRTAKQQSLYQ) lie on the Extracellular side of the membrane. The chain crosses the membrane as a helical span at residues 395–415 (FLALLVALGFAIVGGTVVGFI). Residues 416–460 (LKLPLFGTPSDAECFEDAVYWEVPGGEGHQQLTVVVNNEDPDTQA) lie on the Cytoplasmic side of the membrane.

It belongs to the ammonium transporter (TC 2.A.49) family. Rh subfamily.

The protein resides in the basolateral cell membrane. It is found in the cytoplasmic vesicle membrane. Functions as a specific ammonium transporter. This is Ammonium transporter Rh type B-A (rhbg-a) from Xenopus laevis (African clawed frog).